Here is a 521-residue protein sequence, read N- to C-terminus: Glucose-1-phosphate adenylyltransferase large subunit 3, chloroplastic (521 aa).

A chloroplast-targeting transit peptide spans 1 to 61 (MDSCCNFSLG…RKLRPGVAYA (61 aa)).

The protein belongs to the bacterial/plant glucose-1-phosphate adenylyltransferase family. As to quaternary structure, heterotetramer. As to expression, probably are expressed in roots, flowers and/or seeds.

The protein resides in the plastid. Its subcellular location is the chloroplast. The enzyme catalyses alpha-D-glucose 1-phosphate + ATP + H(+) = ADP-alpha-D-glucose + diphosphate. Its pathway is glycan biosynthesis; starch biosynthesis. Its activity is regulated as follows. Activated by 3'phosphoglycerate, inhibited by orthophosphate. Allosteric regulation. Its function is as follows. This protein plays a role in synthesis of starch. It catalyzes the synthesis of the activated glycosyl donor, ADP-glucose from Glc-1-P and ATP. The protein is Glucose-1-phosphate adenylyltransferase large subunit 3, chloroplastic (APL3) of Arabidopsis thaliana (Mouse-ear cress).